The chain runs to 874 residues: Alanine--tRNA ligase (874 aa).

Residues histidine 562, histidine 566, cysteine 663, and histidine 667 each contribute to the Zn(2+) site.

It belongs to the class-II aminoacyl-tRNA synthetase family. It depends on Zn(2+) as a cofactor.

It is found in the cytoplasm. The catalysed reaction is tRNA(Ala) + L-alanine + ATP = L-alanyl-tRNA(Ala) + AMP + diphosphate. In terms of biological role, catalyzes the attachment of alanine to tRNA(Ala) in a two-step reaction: alanine is first activated by ATP to form Ala-AMP and then transferred to the acceptor end of tRNA(Ala). Also edits incorrectly charged Ser-tRNA(Ala) and Gly-tRNA(Ala) via its editing domain. The chain is Alanine--tRNA ligase from Bordetella parapertussis (strain 12822 / ATCC BAA-587 / NCTC 13253).